The primary structure comprises 1240 residues: DNA polymerase catalytic subunit (1240 aa).

The span at 1 to 22 (MFCAAGGPASPGGKPAARAASG) shows a compositional bias: low complexity. Disordered regions lie at residues 1–44 (MFCA…RRQN), 646–695 (GLDK…RETG), and 1103–1139 (AAAP…ASKP). The span at 669–688 (NGDEDKDDDEDGDEDGDERE) shows a compositional bias: acidic residues.

This sequence belongs to the DNA polymerase type-B family. Forms a complex with the ssDNA-binding protein UL29, the DNA polymerase processivity factor, and the alkaline exonuclease. Interacts with the putative helicase-primase complex subunit UL8; this interaction may coordinate leading and lagging strand DNA synthesis at the replication fork.

It is found in the host nucleus. It catalyses the reaction DNA(n) + a 2'-deoxyribonucleoside 5'-triphosphate = DNA(n+1) + diphosphate. The enzyme catalyses Endonucleolytic cleavage to 5'-phosphomonoester.. In terms of biological role, replicates viral genomic DNA. The replication complex is composed of six viral proteins: the DNA polymerase, processivity factor, primase, primase-associated factor, helicase, and ssDNA-binding protein. Additionally, the polymerase contains an intrinsic ribonuclease H (RNase H) activity that specifically degrades RNA/DNA heteroduplexes or duplex DNA substrates in the 5' to 3' direction. Therefore, it can catalyze the excision of the RNA primers that initiate the synthesis of Okazaki fragments at a replication fork during viral DNA replication. The chain is DNA polymerase catalytic subunit from Human herpesvirus 2 (strain HG52) (HHV-2).